The primary structure comprises 145 residues: Large-conductance mechanosensitive channel (145 aa).

Transmembrane regions (helical) follow at residues 30–50 (VAVVIGGAFTSIVNAFVAWLM) and 74–94 (GELVIAIINFLIIAFVIFLII).

It belongs to the MscL family. Homopentamer.

The protein localises to the cell inner membrane. Channel that opens in response to stretch forces in the membrane lipid bilayer. May participate in the regulation of osmotic pressure changes within the cell. The sequence is that of Large-conductance mechanosensitive channel from Synechocystis sp. (strain ATCC 27184 / PCC 6803 / Kazusa).